A 140-amino-acid polypeptide reads, in one-letter code: 3-hydroxyacyl-[acyl-carrier-protein] dehydratase FabZ (140 aa).

The active site involves histidine 48.

It belongs to the thioester dehydratase family. FabZ subfamily.

It localises to the cytoplasm. The enzyme catalyses a (3R)-hydroxyacyl-[ACP] = a (2E)-enoyl-[ACP] + H2O. In terms of biological role, involved in unsaturated fatty acids biosynthesis. Catalyzes the dehydration of short chain beta-hydroxyacyl-ACPs and long chain saturated and unsaturated beta-hydroxyacyl-ACPs. The chain is 3-hydroxyacyl-[acyl-carrier-protein] dehydratase FabZ from Oceanobacillus iheyensis (strain DSM 14371 / CIP 107618 / JCM 11309 / KCTC 3954 / HTE831).